The sequence spans 524 residues: Inorganic phosphate transporter 1-1 (524 aa).

Residues 1–24 (MAEQQLGVLKALDVAKTQLYHFTA) are Cytoplasmic-facing. Residues 25–45 (IVIAGMGFFTDAYDLFCVSLV) traverse the membrane as a helical segment. Topologically, residues 46–70 (TKLLGRIYYFNPESAKPGSLPPHVA) are extracellular. Residues 71–91 (AAVNGVALCGTLSGQLFFGWL) form a helical membrane-spanning segment. The Cytoplasmic segment spans residues 92–99 (GDKLGRKK). A helical transmembrane segment spans residues 100–120 (VYGLTLVMMILCSVASGLSFG). The Extracellular segment spans residues 121–131 (HEAKGVMTTLC). A helical membrane pass occupies residues 132–152 (FFRFWLGFGIGGDYPLSATIM). Residues 153-161 (SEYANKKTR) lie on the Cytoplasmic side of the membrane. A helical transmembrane segment spans residues 162–182 (GAFIAAVFAMQGVGILAGGFV). At 183 to 211 (ALAVSSIFDKKFPAPTYAVNRALSTPPQV) the chain is on the extracellular side. A helical membrane pass occupies residues 212-232 (DYIWRIIVMFGALPAALTYYW). Over 233-292 (RMKMPETARYTALVAKNIKQATADMSKVLQTDIELEERVEDDVKDPKQNYGLFSKEFLRR) the chain is Cytoplasmic. Residues 293 to 313 (HGLHLLGTTSTWFLLDIAFYS) traverse the membrane as a helical segment. Over 314–348 (QNLFQKDIFSAIGWIPKAATMNATHEVFRIARAQT) the chain is Extracellular. Residues 349–369 (LIALCSTVPGYWFTVAFIDTI) form a helical membrane-spanning segment. Residues 370 to 371 (GR) lie on the Cytoplasmic side of the membrane. The chain crosses the membrane as a helical span at residues 372–392 (FKIQLNGFFMMTVFMFAIAFP). At 393-402 (YNHWIKPENR) the chain is on the extracellular side. A helical membrane pass occupies residues 403-423 (IGFVVMYSLTFFFANFGPNAT). Residues 424-441 (TFIVPAEIFPARLRSTCH) are Cytoplasmic-facing. The helical transmembrane segment at 442–462 (GISAAAGKAGAIVGAFGFLYA) threads the bilayer. At 463 to 484 (AQSQDKAKVDAGYPPGIGVKNS) the chain is on the extracellular side. Residues 485 to 505 (LIMLGVLNFIGMLFTFLVPEP) form a helical membrane-spanning segment. Residues 506 to 524 (KGKSLEELSGEAEVSHDEK) are Cytoplasmic-facing.

It belongs to the major facilitator superfamily. Phosphate:H(+) symporter (TC 2.A.1.9) family. Interacts with NLA. In terms of processing, ubiquitinated by NLA. Ubiquitination of PHT1-1 leads to its degradation by the proteasome. Mostly expressed in roots, especially in trichoblasts and in emerging secondary roots and root hairs, but not in root tips. Also present in hydathodes, axillary buds and peripheral endosperm of germinating seeds.

The protein resides in the cell membrane. With respect to regulation, inhibited by protonophores (e.g. 2,4-dinitrophenol and carbonylcyanide m-chlorophenylhydrazone), the plasma membrane H(+)-ATPase inhibitor diethylstilbestorol, and the phosphate analog arsenate. In terms of biological role, high-affinity transporter for external inorganic phosphate. Acts as a H(+):phosphate symporter in both low- and high-Pi conditions. Confers sensitivity to arsenate. The protein is Inorganic phosphate transporter 1-1 (PHT1-1) of Arabidopsis thaliana (Mouse-ear cress).